Consider the following 337-residue polypeptide: F420-dependent glucose-6-phosphate dehydrogenase (337 aa).

D40 is a coenzyme F420-(gamma-Glu)n binding site. Residue H41 is the Proton donor of the active site. Coenzyme F420-(gamma-Glu)n-binding positions include T77 and 108 to 109 (TG). E110 acts as the Proton acceptor in catalysis. Coenzyme F420-(gamma-Glu)n-binding positions include N113, 178-179 (GG), and 181-182 (VV). 4 residues coordinate substrate: T196, K199, K260, and R284.

This sequence belongs to the F420-dependent glucose-6-phosphate dehydrogenase family. Homodimer.

The catalysed reaction is oxidized coenzyme F420-(gamma-L-Glu)(n) + D-glucose 6-phosphate + H(+) = 6-phospho-D-glucono-1,5-lactone + reduced coenzyme F420-(gamma-L-Glu)(n). Its function is as follows. Catalyzes the coenzyme F420-dependent oxidation of glucose 6-phosphate (G6P) to 6-phosphogluconolactone. This chain is F420-dependent glucose-6-phosphate dehydrogenase, found in Rhodococcus hoagii (strain 103S) (Rhodococcus equi).